A 574-amino-acid chain; its full sequence is Pyruvate kinase PKLR (574 aa).

4 positions are modified to phosphoserine: Ser2, Ser19, Ser26, and Ser43. Position 116 (Arg116) interacts with substrate. Asn118, Ser120, Asp156, and Thr157 together coordinate K(+). 118-121 (NFSH) is an ATP binding site. 2 residues coordinate ATP: Arg163 and Lys250. Residue Ser292 is modified to Phosphoserine. Lys313 serves as a coordination point for substrate. Glu315 contacts Mn(2+). Residues Gly338, Asp339, and Thr371 each coordinate substrate. A Mn(2+)-binding site is contributed by Asp339. Beta-D-fructose 1,6-bisphosphate is bound by residues 475–480 (TTTGRS), Trp525, Arg532, and 559–564 (RPGSGY).

It belongs to the pyruvate kinase family. In terms of assembly, homotetramer. Mg(2+) is required as a cofactor. Requires Mn(2+) as cofactor. The cofactor is K(+).

It catalyses the reaction pyruvate + ATP = phosphoenolpyruvate + ADP + H(+). The protein operates within carbohydrate degradation; glycolysis; pyruvate from D-glyceraldehyde 3-phosphate: step 5/5. Its activity is regulated as follows. Allosterically activated by fructose 1,6-bisphosphate. Pyruvate kinase that catalyzes the conversion of phosphoenolpyruvate to pyruvate with the synthesis of ATP, and which plays a key role in glycolysis. The polypeptide is Pyruvate kinase PKLR (PKLR) (Homo sapiens (Human)).